A 467-amino-acid chain; its full sequence is Envelope glycoprotein M (467 aa).

Over 1 to 32 (MGRRAPRGSPEAAPGADVAPGARAAWWVWCVQ) the chain is Intravirion. The helical transmembrane segment at 33-53 (VATFIVSAICVVGLLVLASVF) threads the bilayer. Residues 54–90 (RDRFPCLYAPATSYAKANATVEVRGGVAVPLRLDTQS) are Virion surface-facing. A helical transmembrane segment spans residues 91–111 (LLATYAITSTLLLAAAVYAAV). Over 112 to 137 (GAVTSRYERALDAARRLAAARMAMPH) the chain is Intravirion. A helical membrane pass occupies residues 138–158 (ATLIAGNVCAWLLQITVLLLA). The Virion surface portion of the chain corresponds to 159–163 (HRISQ). Residues 164-184 (LAHLIYVLHFACLVYLAAHFC) traverse the membrane as a helical segment. Residues 185–220 (TRGVLSGTYLRQVHGLIDPAPTHHRIVGPVRAVMTN) are Intravirion-facing. The chain crosses the membrane as a helical span at residues 221-241 (ALLLGTLLCTAAAAVSLNTIA). Topologically, residues 242 to 250 (ALNFNFSAP) are virion surface. Residues 251 to 271 (SMLICLTTLFALLVVSLLLVV) form a helical membrane-spanning segment. The Intravirion portion of the chain corresponds to 272–280 (EGVLCHYVR). A helical membrane pass occupies residues 281 to 301 (VLVGPHLGAIAATGIVGLACE). The Virion surface segment spans residues 302 to 318 (HYHTGGYYVVEQQWPGA). Residues 319–339 (QTGVRVALALVAAFALAMAVL) traverse the membrane as a helical segment. Residues 340 to 467 (RCTRAYLYHR…EPVYSTVRRW (128 aa)) lie on the Intravirion side of the membrane. A compositionally biased stretch (basic residues) spans 371–381 (RRVRSSMRGSR). 2 disordered regions span residues 371-395 (RRVR…AETP) and 432-459 (VQRP…AGEP).

Belongs to the herpesviridae glycoprotein M family. Interacts (via N-terminus) with gN (via N-terminus). The gM-gN heterodimer forms the gCII complex.

The protein resides in the virion membrane. The protein localises to the host Golgi apparatus. It localises to the host trans-Golgi network. Its subcellular location is the host endosome membrane. It is found in the host nucleus inner membrane. Envelope glycoprotein important for virion assembly and egress. Plays a role in the correct incorporation of gH-gL into virion membrane. Directs the glycoprotein N (gN) to the host trans-Golgi network. This chain is Envelope glycoprotein M, found in Human herpesvirus 2 (strain HG52) (HHV-2).